Here is a 249-residue protein sequence, read N- to C-terminus: UPF0309 protein GTNG_1302 (249 aa).

An SIS domain is found at 31 to 214; that stretch reads VSKAVQNGGI…ALMAENGVEP (184 aa).

This sequence belongs to the UPF0309 family.

The chain is UPF0309 protein GTNG_1302 from Geobacillus thermodenitrificans (strain NG80-2).